The chain runs to 445 residues: MIRIEDIISLAKRKGFVFQSSEVYGGLSGVWDYGPLGIELKQNIQKEWWKNMVYSHENVVGLDSSILMRSEVWTASGHVESFAELLVDCKNCKNRFKIDSIDFSKGCPNCNSMGTFTDPRSFDLMFKTNIGAVEDSSNEIYLRPETAQGIFVNFRNVLDSTRLKVPFGIAQVGKAFRNEIVAKNFIFRTCEFEQMEMQFFVHPNQMDDWYYYWQQKRLNFFIEILGIKSDNLRFKEHKGDELAHYAKAAIDIEYKFPFGFQEIEGIHNRGNYDLSQHAKFCGKPKLFEYHDLISGDRYIPYVIETSLGLTRSVLMTLCDAYAHEELEGGDKRIVLRLHPKIAPYKVAILPLVKKDGLPELARKVFMQFSDDFYMFYDDNGTIGKRYRRQDEIGTPYCVTVDYDSIENKTVTLRHRDTMTQVRIPINDLYSYVRTEILNYKGVSDR.

Substrate-binding residues include Lys-97 and Glu-145. ATP-binding positions include 177–179 (RNE), 187–192 (FRTCEF), 262–263 (EI), and 308–311 (GLTR). A substrate-binding site is contributed by 192 to 196 (FEQME). 304–308 (ETSLG) lines the substrate pocket.

Belongs to the class-II aminoacyl-tRNA synthetase family. In terms of assembly, homodimer.

It localises to the cytoplasm. It carries out the reaction tRNA(Gly) + glycine + ATP = glycyl-tRNA(Gly) + AMP + diphosphate. In terms of biological role, catalyzes the attachment of glycine to tRNA(Gly). This chain is Glycine--tRNA ligase, found in Borrelia hermsii (strain HS1 / DAH).